Reading from the N-terminus, the 149-residue chain is Transcriptional repressor NrdR (149 aa).

The segment at 3 to 34 (CPFCSAVDTKVIDSRLVGEGSSVRRRRQCLVC) is a zinc-finger region. An ATP-cone domain is found at 49–139 (PRVVKSNDVR…VYRSFEDIKE (91 aa)).

It belongs to the NrdR family. The cofactor is Zn(2+).

In terms of biological role, negatively regulates transcription of bacterial ribonucleotide reductase nrd genes and operons by binding to NrdR-boxes. The chain is Transcriptional repressor NrdR from Enterobacter sp. (strain 638).